A 157-amino-acid polypeptide reads, in one-letter code: MPSVESFELDHTIVKAPYVRHCGVHNVGSDGIVNKFDIRFCQPNKQAMKPDVIHTLEHLLAFNLRKYIDRYPHFDIIDISPMGCQTGYYLVVSGTPTVREIIDLLELTLKDAVQITEIPAANETQCGQAKLHDLEGAKRLMNFWLSQDKDELEKVFE.

3 residues coordinate Fe cation: His54, His58, and Cys126.

It belongs to the LuxS family. Homodimer. Requires Fe cation as cofactor.

It carries out the reaction S-(5-deoxy-D-ribos-5-yl)-L-homocysteine = (S)-4,5-dihydroxypentane-2,3-dione + L-homocysteine. Its function is as follows. Involved in the synthesis of autoinducer 2 (AI-2) which is secreted by bacteria and is used to communicate both the cell density and the metabolic potential of the environment. The regulation of gene expression in response to changes in cell density is called quorum sensing. Catalyzes the transformation of S-ribosylhomocysteine (RHC) to homocysteine (HC) and 4,5-dihydroxy-2,3-pentadione (DPD). The sequence is that of S-ribosylhomocysteine lyase from Bacillus cereus (strain 03BB102).